Here is an 883-residue protein sequence, read N- to C-terminus: Translation initiation factor IF-2 (883 aa).

Residues 32-45 (NDLNGKNNSNSSIN) are compositionally biased toward polar residues. Disordered stretches follow at residues 32–216 (NDLN…QNKY) and 251–275 (RKLG…AETE). Over residues 46–62 (LDKHNNKVEYSQNRDNR) the composition is skewed to basic and acidic residues. The segment covering 75 to 216 (GGYSQNRDNR…VGKNTSQNKY (142 aa)) has biased composition (polar residues). Residues 251–260 (RKLGEKKKQQ) are compositionally biased toward basic and acidic residues. One can recognise a tr-type G domain in the interval 381–554 (EKPPVITIMG…DMMLLKANPS (174 aa)). Positions 390-397 (GHVDHGKT) are G1. Position 390–397 (390–397 (GHVDHGKT)) interacts with GTP. A G2 region spans residues 415 to 419 (GITQH). The segment at 436–439 (DTPG) is G3. GTP-binding positions include 436–440 (DTPGH) and 490–493 (NKID). Residues 490 to 493 (NKID) form a G4 region. The interval 526–528 (SAL) is G5.

Belongs to the TRAFAC class translation factor GTPase superfamily. Classic translation factor GTPase family. IF-2 subfamily.

The protein resides in the cytoplasm. One of the essential components for the initiation of protein synthesis. Protects formylmethionyl-tRNA from spontaneous hydrolysis and promotes its binding to the 30S ribosomal subunits. Also involved in the hydrolysis of GTP during the formation of the 70S ribosomal complex. In Borrelia garinii subsp. bavariensis (strain ATCC BAA-2496 / DSM 23469 / PBi) (Borreliella bavariensis), this protein is Translation initiation factor IF-2.